Consider the following 410-residue polypeptide: Platelet-activating factor acetylhydrolase IB subunit beta (410 aa).

Residues 1–38 (MVLSQRQRDELNRAIADYLRSNGYEEAYSVFKKEAELD) form a required for self-association and interaction with PAFAH1B2 and PAFAH1B3 region. The interaction with NDE1 stretch occupies residues 1 to 66 (MVLSQRQRDE…SVIRLQKKVM (66 aa)). Positions 1–102 (MVLSQRQRDE…EWIPRPPEKY (102 aa)) are interaction with NDEL1. Positions 7 to 39 (QRDELNRAIADYLRSNGYEEAYSVFKKEAELDV) constitute a LisH domain. At lysine 53 the chain carries N6-acetyllysine. Positions 56 to 82 (TSVIRLQKKVMELESKLNEAKEEFTSG) form a coiled coil. An interaction with dynein and dynactin region spans residues 83–410 (GPLGQKRDPK…DQTVKVWECR (328 aa)). 7 WD repeats span residues 106–147 (GHRS…RTLK), 148–187 (GHTDSVQDISFDHSGKLLASCSADMTIKLWDFQGFECIRT), 190–229 (GHDHNVSSVAIMPNGDHIVSASRDKTIKMWEVQTGYCVKT), 232–271 (GHREWVRMVRPNQDGTLIASCSNDQTVRVWVVATKECKAE), 274–333 (EHEH…CLMT), 336–377 (GHDN…KTLN), and 378–410 (AHEHFVTSLDFHKTAPYVVTGSVDQTVKVWECR). Serine 109 carries the post-translational modification Phosphoserine. The tract at residues 367 to 409 (YKNKRCMKTLNAHEHFVTSLDFHKTAPYVVTGSVDQTVKVWEC) is interaction with DCX. The segment at 388–410 (FHKTAPYVVTGSVDQTVKVWECR) is interaction with NDEL1.

Belongs to the WD repeat LIS1/nudF family. In terms of assembly, component of the cytosolic PAF-AH (I) heterotetrameric enzyme, which is composed of PAFAH1B1 (beta), PAFAH1B2 (alpha2) and PAFAH1B3 (alpha1) subunits. The catalytic activity of the enzyme resides in the alpha1 (PAFAH1B3) and alpha2 (PAFAH1B2) subunits, whereas the beta subunit (PAFAH1B1) has regulatory activity. Trimer formation is not essential for the catalytic activity. Interacts with the catalytic dimer of PAF-AH (I) heterotetrameric enzyme: interacts with PAFAH1B2 homodimer (alpha2/alpha2 homodimer), PAFAH1B3 homodimer (alpha1/alpha1 homodimer) and PAFAH1B2-PAFAH1B3 heterodimer (alpha2/alpha1 heterodimer). Interacts with IQGAP1, KATNB1 and NUDC. Interacts with DAB1 when DAB1 is phosphorylated in response to RELN/reelin signaling. Can self-associate. Interacts with DCX, dynein, dynactin, NDE1, NDEL1 and RSN. Interacts with DISC1, and this interaction is enhanced by NDEL1. Interacts with INTS13. Interacts with DCDC1. As to expression, fairly ubiquitous expression in both the frontal and occipital areas of the brain.

The protein localises to the cytoplasm. The protein resides in the cytoskeleton. It is found in the microtubule organizing center. It localises to the centrosome. Its subcellular location is the spindle. The protein localises to the nucleus membrane. Functionally, regulatory subunit (beta subunit) of the cytosolic type I platelet-activating factor (PAF) acetylhydrolase (PAF-AH (I)), an enzyme that catalyzes the hydrolyze of the acetyl group at the sn-2 position of PAF and its analogs and participates in PAF inactivation. Regulates the PAF-AH (I) activity in a catalytic dimer composition-dependent manner. Required for proper activation of Rho GTPases and actin polymerization at the leading edge of locomoting cerebellar neurons and postmigratory hippocampal neurons in response to calcium influx triggered via NMDA receptors. Positively regulates the activity of the minus-end directed microtubule motor protein dynein. May enhance dynein-mediated microtubule sliding by targeting dynein to the microtubule plus end. Required for several dynein- and microtubule-dependent processes such as the maintenance of Golgi integrity, the peripheral transport of microtubule fragments and the coupling of the nucleus and centrosome. Required during brain development for the proliferation of neuronal precursors and the migration of newly formed neurons from the ventricular/subventricular zone toward the cortical plate. Neuronal migration involves a process called nucleokinesis, whereby migrating cells extend an anterior process into which the nucleus subsequently translocates. During nucleokinesis dynein at the nuclear surface may translocate the nucleus towards the centrosome by exerting force on centrosomal microtubules. May also play a role in other forms of cell locomotion including the migration of fibroblasts during wound healing. Required for dynein recruitment to microtubule plus ends and BICD2-bound cargos. May modulate the Reelin pathway through interaction of the PAF-AH (I) catalytic dimer with VLDLR. The polypeptide is Platelet-activating factor acetylhydrolase IB subunit beta (Homo sapiens (Human)).